The chain runs to 155 residues: uncharacterized protein (155 aa).

2 disordered regions span residues 24 to 63 and 80 to 155; these read RVGY…VVLK and KAAK…DENE. Acidic residues predominate over residues 43-56; sequence PDEDGNESDKEDEQ. Residue S50 is modified to Phosphoserine. Residue K108 is modified to N6-acetyllysine. Positions 128 to 147 are enriched in polar residues; it reads KQSPVRKNSQKQIKNSSLLS. Phosphoserine occurs at positions 130, 147, and 150.

This is an uncharacterized protein from Rattus norvegicus (Rat).